The primary structure comprises 130 residues: Small ribosomal subunit protein uS9 (130 aa).

The protein belongs to the universal ribosomal protein uS9 family.

The polypeptide is Small ribosomal subunit protein uS9 (Burkholderia multivorans (strain ATCC 17616 / 249)).